The sequence spans 257 residues: Adenylate kinase (257 aa).

52 to 57 (GAGKGT) provides a ligand contact to ATP. The interval 72-101 (ATGDMLRSQVAKKTELGKEAKKIMDQGGLV) is NMP. AMP-binding positions include T73, R78, 99–101 (GLV), 128–131 (GFPR), and Q135. The tract at residues 169 to 206 (GRLVHPASGRSYHKIFNPPKNDMKDDVTGEPLIQRSDD) is LID. ATP is bound by residues R170 and 179 to 180 (SY). AMP contacts are provided by R203 and R214. Q242 contacts ATP.

The protein belongs to the adenylate kinase family. AK2 subfamily. In terms of assembly, monomer.

The protein localises to the cytoplasm. It localises to the cytosol. The protein resides in the mitochondrion intermembrane space. It carries out the reaction AMP + ATP = 2 ADP. Its function is as follows. Catalyzes the reversible transfer of the terminal phosphate group between ATP and AMP. Plays an important role in cellular energy homeostasis and in adenine nucleotide metabolism. Adenylate kinase activity is critical for regulation of the phosphate utilization and the AMP de novo biosynthesis pathways. In Neosartorya fischeri (strain ATCC 1020 / DSM 3700 / CBS 544.65 / FGSC A1164 / JCM 1740 / NRRL 181 / WB 181) (Aspergillus fischerianus), this protein is Adenylate kinase (adk1).